A 145-amino-acid polypeptide reads, in one-letter code: Cytochrome b (145 aa).

The helical transmembrane segment at Phe38–Ile58 threads the bilayer. Positions 42 and 56 each coordinate heme b. An a ubiquinone-binding site is contributed by His61. Residues Phe85–Phe105 form a helical membrane-spanning segment.

This sequence belongs to the cytochrome b family. In terms of assembly, fungal cytochrome b-c1 complex contains 10 subunits; 3 respiratory subunits, 2 core proteins and 5 low-molecular weight proteins. Cytochrome b-c1 complex is a homodimer. It depends on heme b as a cofactor.

It is found in the mitochondrion inner membrane. Its function is as follows. Component of the ubiquinol-cytochrome c reductase complex (complex III or cytochrome b-c1 complex) that is part of the mitochondrial respiratory chain. The b-c1 complex mediates electron transfer from ubiquinol to cytochrome c. Contributes to the generation of a proton gradient across the mitochondrial membrane that is then used for ATP synthesis. The polypeptide is Cytochrome b (cob) (Aspergillus flavus).